Here is a 251-residue protein sequence, read N- to C-terminus: DNA repair protein RecO (251 aa).

It belongs to the RecO family.

Involved in DNA repair and RecF pathway recombination. In Macrococcus caseolyticus (strain JCSC5402) (Macrococcoides caseolyticum), this protein is DNA repair protein RecO.